We begin with the raw amino-acid sequence, 138 residues long: Histone H2B.8 (138 aa).

Residues 1–38 show a composition bias toward basic and acidic residues; sequence MAPKAAEKKPAGKKPAEKAPAEKLPKAEKKITKEGGSE. The interval 1-45 is disordered; it reads MAPKAAEKKPAGKKPAEKAPAEKLPKAEKKITKEGGSEKKKKKSK. A N,N,N-trimethylalanine; alternate modification is found at alanine 2. A N,N-dimethylalanine; alternate modification is found at alanine 2. N-methylalanine; alternate is present on alanine 2. Lysine 4 is subject to N6-methyllysine. An N6-acetyllysine mark is found at lysine 8 and lysine 13. Lysine 14 carries the N6,N6-dimethyllysine modification. Residues lysine 18, lysine 23, lysine 29, and lysine 30 each carry the N6-acetyllysine modification. A Glycyl lysine isopeptide (Lys-Gly) (interchain with G-Cter in ubiquitin) cross-link involves residue lysine 134.

Belongs to the histone H2B family. In terms of assembly, the nucleosome is a histone octamer containing two molecules each of H2A, H2B, H3 and H4 assembled in one H3-H4 heterotetramer and two H2A-H2B heterodimers. The octamer wraps approximately 147 bp of DNA. Post-translationally, can be acetylated to form H2BK6ac, H2BK33ac and H2BK34ac. In terms of processing, monoubiquitinated by BRE1 to form H2BK143ub1 and deubiquitinated by UBP26. Required for heterochromatic histone H3 di- and trimethylation at H3K4me. May give a specific tag for epigenetic transcriptional activation.

The protein localises to the nucleus. It is found in the chromosome. Core component of nucleosome. Nucleosomes wrap and compact DNA into chromatin, limiting DNA accessibility to the cellular machineries which require DNA as a template. Histones thereby play a central role in transcription regulation, DNA repair, DNA replication and chromosomal stability. DNA accessibility is regulated via a complex set of post-translational modifications of histones, also called histone code, and nucleosome remodeling. The sequence is that of Histone H2B.8 from Arabidopsis thaliana (Mouse-ear cress).